A 377-amino-acid chain; its full sequence is CaM kinase-like vesicle-associated protein (377 aa).

The 264-residue stretch at 24–287 (YDLGQLIKTE…AADAISHEWI (264 aa)) folds into the Protein kinase domain. The disordered stretch occupies residues 324–377 (MKRLRAPEQTDPGTPSPSKDSDKTPSMATPAPSPANTPAEGAPSLPCPSPDTTG). Residues 347-362 (TPSMATPAPSPANTPA) are compositionally biased toward low complexity. Over residues 368-377 (LPCPSPDTTG) the composition is skewed to pro residues.

This sequence belongs to the protein kinase superfamily. CAMK Ser/Thr protein kinase family. Interacts with calmodulin, in the presence of calcium. Requires Ca(2+) as cofactor.

The protein localises to the cytoplasmic vesicle membrane. Does not appear to have detectable kinase activity. The sequence is that of CaM kinase-like vesicle-associated protein (camkv) from Xenopus laevis (African clawed frog).